A 159-amino-acid polypeptide reads, in one-letter code: 17 kDa surface antigen (159 aa).

Positions 1 to 19 are cleaved as a signal peptide; sequence MKLLSKIMIIALATSMLQA. Cysteine 20 is lipidated: N-palmitoyl cysteine. The S-diacylglycerol cysteine moiety is linked to residue cysteine 20.

It belongs to the rickettsiale 17 kDa surface antigen family.

It is found in the cell outer membrane. The chain is 17 kDa surface antigen (omp) from Rickettsia conorii (strain ATCC VR-613 / Malish 7).